The sequence spans 260 residues: Indole-3-glycerol phosphate synthase (260 aa).

Belongs to the TrpC family.

It catalyses the reaction 1-(2-carboxyphenylamino)-1-deoxy-D-ribulose 5-phosphate + H(+) = (1S,2R)-1-C-(indol-3-yl)glycerol 3-phosphate + CO2 + H2O. The protein operates within amino-acid biosynthesis; L-tryptophan biosynthesis; L-tryptophan from chorismate: step 4/5. The chain is Indole-3-glycerol phosphate synthase from Staphylococcus aureus (strain bovine RF122 / ET3-1).